The primary structure comprises 675 residues: Gastrula zinc finger protein xFG20-1 (675 aa).

C2H2-type zinc fingers lie at residues 62-84, 90-112, 118-140, 146-168, 174-196, 202-224, 257-279, 286-308, 344-366, and 373-395; these read FTCT…IRAH, FSCM…YSVH, FSCT…LRVH, YSCE…QRTH, FSCT…LKTH, HLCA…QKIH, FPCT…QSTH, and LPCT…QSTH. Positions 302 to 325 are disordered; it reads RTHQSTHTEGQKSLPSTESGGTFS. Over residues 304–325 the composition is skewed to polar residues; it reads HQSTHTEGQKSLPSTESGGTFS. Residues 390-407 are compositionally biased toward polar residues; the sequence is THQSTHTSPSTEFGVQTT. Residues 390–423 are disordered; the sequence is THQSTHTSPSTEFGVQTTEDNHQSPSKDHTGEKP. Over residues 408–421 the composition is skewed to basic and acidic residues; the sequence is EDNHQSPSKDHTGE. 8 consecutive C2H2-type zinc fingers follow at residues 424-446, 452-474, 480-501, 507-529, 535-557, 563-585, 591-613, and 619-642; these read FSCS…LVVH, YHCI…QRTH, FSCN…YRVH, YPCT…YKVH, YPCQ…LRTH, FSCT…LTTH, FSCT…YKMH, and FTCT…TTVH.

Belongs to the krueppel C2H2-type zinc-finger protein family.

It localises to the nucleus. In terms of biological role, may be involved in transcriptional regulation. The chain is Gastrula zinc finger protein xFG20-1 from Xenopus laevis (African clawed frog).